We begin with the raw amino-acid sequence, 160 residues long: Cytochrome b6-f complex subunit 4 (160 aa).

3 helical membrane passes run 36 to 56 (LLYVFPIVIMGSFAAIVALAV), 95 to 115 (LLGVLAMASVPLGLILVPFIE), and 131 to 151 (TVFLFGTLVTLWLGIGAALPL).

It belongs to the cytochrome b family. PetD subfamily. As to quaternary structure, the 4 large subunits of the cytochrome b6-f complex are cytochrome b6, subunit IV (17 kDa polypeptide, PetD), cytochrome f and the Rieske protein, while the 4 small subunits are PetG, PetL, PetM and PetN. The complex functions as a dimer.

It is found in the cellular thylakoid membrane. In terms of biological role, component of the cytochrome b6-f complex, which mediates electron transfer between photosystem II (PSII) and photosystem I (PSI), cyclic electron flow around PSI, and state transitions. The sequence is that of Cytochrome b6-f complex subunit 4 from Desmonostoc sp. (strain PCC 7906) (Nostoc sp. (strain PCC 7906)).